We begin with the raw amino-acid sequence, 530 residues long: uncharacterized protein (530 aa).

Positions 485–529 (SKEENREIKLSIRENKEKQRKKSVEKSVSKLQNQLNRLLNKNTIE) form a coiled coil.

This is an uncharacterized protein from Acanthamoeba polyphaga (Amoeba).